A 185-amino-acid polypeptide reads, in one-letter code: MSQIRLTFLKEKNKMKAIKKEFNKKAALLEEKVVKINRITKVVKGGARFRFSALVVVGDKKGQIGFATAKAKEIVEAIKKALEKAKKQLVRIPIVGTTIPHDTIGRFGASKFFLKPASKGTGIVAGGKAARTILELVGINDVLTKTFGSRTSINVIRAVMDGLQSLRTKEEVAKLRGINLAKKEQ.

Positions 29 to 92 (LEEKVVKINR…EKAKKQLVRI (64 aa)) constitute an S5 DRBM domain.

Belongs to the universal ribosomal protein uS5 family. Part of the 30S ribosomal subunit. Contacts proteins S4 and S8.

Its function is as follows. With S4 and S12 plays an important role in translational accuracy. In terms of biological role, located at the back of the 30S subunit body where it stabilizes the conformation of the head with respect to the body. The polypeptide is Small ribosomal subunit protein uS5 (Aster yellows witches'-broom phytoplasma (strain AYWB)).